The sequence spans 316 residues: DnaJ homolog subfamily B member 13 (316 aa).

The 65-residue stretch at 4–68 folds into the J domain; it reads DYYSVLGITR…MKRGIYDKFG (65 aa).

Homodimer. Component of the axonemal radial spoke complex 1 (RS1), at least composed of spoke head proteins RSPH1, RSPH3, RSPH9 and the cilia-specific component RSPH4A or sperm-specific component RSPH6A, spoke stalk proteins RSPH14, DNAJB13, DYDC1, ROPN1L and NME5, and the anchor protein IQUB. Interacts with SUN5. Interacts with IQUB. In terms of tissue distribution, specifically expressed in testis and trachea.

Its subcellular location is the cell projection. The protein resides in the cilium. It is found in the flagellum. Functionally, functions as part of axonemal radial spoke complexes that play an important part in the motility of sperm and cilia. This Homo sapiens (Human) protein is DnaJ homolog subfamily B member 13 (DNAJB13).